We begin with the raw amino-acid sequence, 134 residues long: MAETTEFELVSPERLLFSEPVEMVVVPGTDGDFGAMPRHAPLLSTVRPGVISTYNGGKVQRRIFVAGGFAEVTEDRCTVLADEAFDLASLSEEAVRARLQAADDRLKEATSEAEKAEAAQAKAIAEALLAARKG.

The protein belongs to the ATPase epsilon chain family. F-type ATPases have 2 components, CF(1) - the catalytic core - and CF(0) - the membrane proton channel. CF(1) has five subunits: alpha(3), beta(3), gamma(1), delta(1), epsilon(1). CF(0) has three main subunits: a, b and c.

It is found in the cell inner membrane. Its function is as follows. Produces ATP from ADP in the presence of a proton gradient across the membrane. The protein is ATP synthase epsilon chain of Rhodospirillum rubrum (strain ATCC 11170 / ATH 1.1.1 / DSM 467 / LMG 4362 / NCIMB 8255 / S1).